Here is a 226-residue protein sequence, read N- to C-terminus: 2,3-bisphosphoglycerate-dependent phosphoglycerate mutase (226 aa).

Substrate-binding positions include 8–15 (RHGQSVWN), 21–22 (TG), Arg58, 109–112 (ERMY), Lys120, 136–137 (RR), and 180–181 (GN). His9 (tele-phosphohistidine intermediate) is an active-site residue. The active-site Proton donor/acceptor is the Glu109.

It belongs to the phosphoglycerate mutase family. BPG-dependent PGAM subfamily.

The enzyme catalyses (2R)-2-phosphoglycerate = (2R)-3-phosphoglycerate. The protein operates within carbohydrate degradation; glycolysis; pyruvate from D-glyceraldehyde 3-phosphate: step 3/5. Functionally, catalyzes the interconversion of 2-phosphoglycerate and 3-phosphoglycerate. The chain is 2,3-bisphosphoglycerate-dependent phosphoglycerate mutase from Chlamydia trachomatis serovar L2b (strain UCH-1/proctitis).